Here is a 253-residue protein sequence, read N- to C-terminus: Triosephosphate isomerase (253 aa).

8-10 (NWK) provides a ligand contact to substrate. The active-site Electrophile is the His91. The active-site Proton acceptor is the Glu168. Residues Gly174, Ser213, and 234–235 (GG) contribute to the substrate site.

It belongs to the triosephosphate isomerase family. In terms of assembly, homodimer.

Its subcellular location is the cytoplasm. The catalysed reaction is D-glyceraldehyde 3-phosphate = dihydroxyacetone phosphate. It participates in carbohydrate biosynthesis; gluconeogenesis. The protein operates within carbohydrate degradation; glycolysis; D-glyceraldehyde 3-phosphate from glycerone phosphate: step 1/1. In terms of biological role, involved in the gluconeogenesis. Catalyzes stereospecifically the conversion of dihydroxyacetone phosphate (DHAP) to D-glyceraldehyde-3-phosphate (G3P). The chain is Triosephosphate isomerase from Acidiphilium cryptum (strain JF-5).